Reading from the N-terminus, the 925-residue chain is Translation initiation factor IF-2 (925 aa).

The segment at 190 to 329 (PAAPTSEAAP…RRRDEREAAV (140 aa)) is disordered. Composition is skewed to pro residues over residues 199–209 (PPEPEPTPLPA), 217–238 (PVRP…PAPR), and 279–288 (RPVPAQPAPQ). The span at 289–307 (TPTRSGSGIAKKGAITKAG) shows a compositional bias: low complexity. Residues 320 to 329 (RRRDEREAAV) are compositionally biased toward basic and acidic residues. The tr-type G domain maps to 417-589 (VRPPVVTIMG…LLLVADYELE (173 aa)). Positions 426-433 (GHVDHGKT) are G1. 426 to 433 (GHVDHGKT) serves as a coordination point for GTP. The G2 stretch occupies residues 451–455 (GITQH). The tract at residues 476-479 (DTPG) is G3. GTP contacts are provided by residues 476 to 480 (DTPGH) and 530 to 533 (NKVD). Residues 530 to 533 (NKVD) form a G4 region. Residues 566–568 (SAK) are G5.

Belongs to the TRAFAC class translation factor GTPase superfamily. Classic translation factor GTPase family. IF-2 subfamily.

The protein localises to the cytoplasm. One of the essential components for the initiation of protein synthesis. Protects formylmethionyl-tRNA from spontaneous hydrolysis and promotes its binding to the 30S ribosomal subunits. Also involved in the hydrolysis of GTP during the formation of the 70S ribosomal complex. This is Translation initiation factor IF-2 from Gloeobacter violaceus (strain ATCC 29082 / PCC 7421).